The following is a 71-amino-acid chain: Ceratotoxin-D (71 aa).

The N-terminal stretch at 1–23 is a signal peptide; sequence MANLKAVFLICILAFIAFHCVVG. A propeptide spanning residues 24–35 is cleaved from the precursor; sequence APTAEDSIVVKR.

As to quaternary structure, homomer of four to six subunits.

The protein resides in the secreted. Its function is as follows. Female-specific peptides with potent activity against Gram-positive and Gram-negative bacteria. They have as well hemolytic activity. The protein is Ceratotoxin-D (CTXD) of Ceratitis capitata (Mediterranean fruit fly).